Here is a 190-residue protein sequence, read N- to C-terminus: Pancreatic IgW, short secretory form (190 aa).

Positions 53–145 (PNITALVPSV…PPSNFRSMIS (93 aa)) constitute an Ig-like C1-type domain. N-linked (GlcNAc...) asparagine glycosylation is present at asparagine 54. Cysteine 74 and cysteine 131 form a disulfide bridge. N-linked (GlcNAc...) asparagine glycosylation is present at asparagine 179.

In terms of tissue distribution, expressed in pancreas, spleen, epigonal organ and at low levels in several other tissues.

It localises to the secreted. This chain is Pancreatic IgW, short secretory form, found in Ginglymostoma cirratum (Nurse shark).